Consider the following 23-residue polypeptide: Aldehyde dehydrogenase (23 aa).

Belongs to the aldehyde dehydrogenase family.

It carries out the reaction an aldehyde + NAD(+) + H2O = a carboxylate + NADH + 2 H(+). The polypeptide is Aldehyde dehydrogenase (Moraxella sp. (strain TAE123)).